Consider the following 309-residue polypeptide: tRNA uridine(34) hydroxylase (309 aa).

In terms of domain architecture, Rhodanese spans 130-224 (SDPDTIVIDT…YLEEVPQEES (95 aa)). Residue Cys-184 is the Cysteine persulfide intermediate of the active site.

The protein belongs to the TrhO family.

The enzyme catalyses uridine(34) in tRNA + AH2 + O2 = 5-hydroxyuridine(34) in tRNA + A + H2O. In terms of biological role, catalyzes oxygen-dependent 5-hydroxyuridine (ho5U) modification at position 34 in tRNAs. The protein is tRNA uridine(34) hydroxylase of Rhizobium leguminosarum bv. trifolii (strain WSM2304).